A 219-amino-acid polypeptide reads, in one-letter code: MRSTYLREYKLVVVGDGGVGKSALTIQLIQSHFVDEYDPTIEDSYRKKCEIDGEGALLDVLDTAGQEEYSAMREQYMRTGEGFLLVYNITSRSSFDEISTFYQQILRVKDKDTFPVVLVANKCDLEAERVVSRAEGEQLAKSMHCLYVETSAKLRLNVEEAFYSLVRTIRRYNKSEEKGFQNKQAVQTAQVPASTAKRASAVNNSKTEDEVSTKCCVIC.

15-22 (GDGGVGKS) serves as a coordination point for GTP. The Effector region signature appears at 37–45 (YDPTIEDSY). Residues 62 to 66 (DTAGQ) and 121 to 124 (NKCD) each bind GTP. The residue at position 216 (Cys-216) is a Cysteine methyl ester. Residue Cys-216 is the site of S-farnesyl cysteine attachment. Residues 217-219 (VIC) constitute a propeptide, removed in mature form.

The protein belongs to the small GTPase superfamily. Ras family. Scd1, scd2, cdc42, and ras1, in its GTP-bound state, act cooperatively to form a protein complex. Post-translationally, palmitoylated by the erf2-erf4 complex.

The protein resides in the cell membrane. It catalyses the reaction GTP + H2O = GDP + phosphate + H(+). With respect to regulation, alternates between an inactive form bound to GDP and an active form bound to GTP. Activated by a guanine nucleotide-exchange factor (GEF) and inactivated by a GTPase-activating protein (GAP). Functionally, participates in the process of sexual differentiation and the determination of cell shape. Essential for mating and for recognition of the mating pheromone, but not for vegetative growth. Does not regulate the intracellular cAMP level. Regulates two downstream pathways, namely the byr2/byr1/spk1 mitogen-activated protein kinase cascade and the cdc42 small G protein pathway. The former is relevant to mating and sporulation, whereas the latter is relevant to mating, cell growth and cell morphology. The sequence is that of Ras-like protein 1 (ras1) from Schizosaccharomyces pombe (strain 972 / ATCC 24843) (Fission yeast).